The sequence spans 572 residues: Urease subunit alpha (572 aa).

Residues 134-572 (GGIDSHIHFI…LPLTQRYFLF (439 aa)) enclose the Urease domain. Ni(2+) is bound by residues H139, H141, and K222. Position 222 is an N6-carboxylysine (K222). A substrate-binding site is contributed by H224. H251 and H277 together coordinate Ni(2+). H325 serves as the catalytic Proton donor. D365 contacts Ni(2+).

It belongs to the metallo-dependent hydrolases superfamily. Urease alpha subunit family. In terms of assembly, heterotrimer of UreA (gamma), UreB (beta) and UreC (alpha) subunits. Three heterotrimers associate to form the active enzyme. Ni cation serves as cofactor. Post-translationally, carboxylation allows a single lysine to coordinate two nickel ions.

It is found in the cytoplasm. The catalysed reaction is urea + 2 H2O + H(+) = hydrogencarbonate + 2 NH4(+). The protein operates within nitrogen metabolism; urea degradation; CO(2) and NH(3) from urea (urease route): step 1/1. This chain is Urease subunit alpha, found in Variovorax paradoxus (strain S110).